Here is a 753-residue protein sequence, read N- to C-terminus: Synaptotagmin-like protein 5 (753 aa).

Positions 7 to 123 (FINLSFLLDH…IISGEWFLEE (117 aa)) constitute a RabBD domain. An FYVE-type zinc finger spans residues 64–106 (CVHCHKTLGLIFDRGDPCQACSLRVCSECRVTGLDGSWKCTVC). Disordered stretches follow at residues 145–279 (RRSP…SREH), 297–359 (LTKS…LNSL), and 380–404 (LASGLSTNSQAGSDRKRSYLNVPDA). Position 147 is a phosphoserine (Ser-147). Over residues 150-174 (SEETQNQEQAQQCVDKSDTLSSVRQ) the composition is skewed to polar residues. Over residues 195–206 (TRGEIRTPKPES) the composition is skewed to basic and acidic residues. The span at 214 to 223 (LDSQNLQSFK) shows a compositional bias: polar residues. Residues 224 to 237 (SASGSDRGSTTSSD) are compositionally biased toward low complexity. The span at 249–275 (KSSYSNGGIPVTQRSPVPSAHSVTSIN) shows a compositional bias: polar residues. Over residues 380 to 391 (LASGLSTNSQAG) the composition is skewed to polar residues. C2 domains lie at 429–550 (VTGE…DEWF) and 597–717 (KRGK…VDWM).

As to quaternary structure, binds RAB27A that has been activated by GTP-binding.

It is found in the membrane. Its function is as follows. May act as Rab effector protein and play a role in vesicle trafficking. Binds phospholipids. The sequence is that of Synaptotagmin-like protein 5 (Sytl5) from Mus musculus (Mouse).